The sequence spans 198 residues: Recombination protein RecR (198 aa).

The C4-type zinc finger occupies 57–72; that stretch reads CSVCGHITDKDPCYIC. Residues 80-175 form the Toprim domain; sequence SVLCVVQESK…KVTRIAHGLP (96 aa).

This sequence belongs to the RecR family.

In terms of biological role, may play a role in DNA repair. It seems to be involved in an RecBC-independent recombinational process of DNA repair. It may act with RecF and RecO. This Listeria innocua serovar 6a (strain ATCC BAA-680 / CLIP 11262) protein is Recombination protein RecR.